Here is a 61-residue protein sequence, read N- to C-terminus: Short neurotoxin 2 (61 aa).

Intrachain disulfides connect C3/C23, C17/C40, C42/C53, and C54/C59.

The protein belongs to the three-finger toxin family. Short-chain subfamily. Type I alpha-neurotoxin sub-subfamily. In terms of tissue distribution, expressed by the venom gland.

It localises to the secreted. Binds to muscle nicotinic acetylcholine receptor (nAChR) and inhibit acetylcholine from binding to the receptor, thereby impairing neuromuscular transmission. The sequence is that of Short neurotoxin 2 from Hemachatus haemachatus (Rinkhals).